Consider the following 156-residue polypeptide: Flagellar assembly factor FliW (156 aa).

Belongs to the FliW family. As to quaternary structure, interacts with translational regulator CsrA and flagellin(s).

It is found in the cytoplasm. Acts as an anti-CsrA protein, binds CsrA and prevents it from repressing translation of its target genes, one of which is flagellin. Binds to flagellin and participates in the assembly of the flagellum. The chain is Flagellar assembly factor FliW from Syntrophomonas wolfei subsp. wolfei (strain DSM 2245B / Goettingen).